The following is a 264-amino-acid chain: Thymidylate synthase (264 aa).

Arginine 21 is a dUMP binding site. Histidine 51 contacts (6R)-5,10-methylene-5,6,7,8-tetrahydrofolate. 126 to 127 is a dUMP binding site; it reads RR. The Nucleophile role is filled by cysteine 146. DUMP is bound by residues 166 to 169, asparagine 177, and 207 to 209; these read RSAD and HLY. A (6R)-5,10-methylene-5,6,7,8-tetrahydrofolate-binding site is contributed by aspartate 169. Alanine 263 contacts (6R)-5,10-methylene-5,6,7,8-tetrahydrofolate.

It belongs to the thymidylate synthase family. Bacterial-type ThyA subfamily. Homodimer.

The protein localises to the cytoplasm. It catalyses the reaction dUMP + (6R)-5,10-methylene-5,6,7,8-tetrahydrofolate = 7,8-dihydrofolate + dTMP. The protein operates within pyrimidine metabolism; dTTP biosynthesis. In terms of biological role, catalyzes the reductive methylation of 2'-deoxyuridine-5'-monophosphate (dUMP) to 2'-deoxythymidine-5'-monophosphate (dTMP) while utilizing 5,10-methylenetetrahydrofolate (mTHF) as the methyl donor and reductant in the reaction, yielding dihydrofolate (DHF) as a by-product. This enzymatic reaction provides an intracellular de novo source of dTMP, an essential precursor for DNA biosynthesis. This chain is Thymidylate synthase, found in Nitrosomonas europaea (strain ATCC 19718 / CIP 103999 / KCTC 2705 / NBRC 14298).